A 2890-amino-acid chain; its full sequence is Bifunctional DNA-directed RNA polymerase subunit beta-beta' (2890 aa).

The tract at residues 1-1377 (MSKKIPLKNR…DINIFGDDVD (1377 aa)) is DNA-directed RNA polymerase subunit beta. The tract at residues 1384–2890 (PIVIKEDDRP…LRTLEDGPKF (1507 aa)) is DNA-directed RNA polymerase subunit beta'. Zn(2+) is bound by residues Cys1449, Cys1451, Cys1465, and Cys1468. Positions 1849, 1851, and 1853 each coordinate Mg(2+). Residues Cys2179, Cys2253, Cys2260, and Cys2263 each coordinate Zn(2+).

The protein in the N-terminal section; belongs to the RNA polymerase beta chain family. In the C-terminal section; belongs to the RNA polymerase beta' chain family. As to quaternary structure, the RNAP catalytic core consists of 2 alpha, 1 beta/beta' and 1 omega subunit. When a sigma factor is associated with the core the holoenzyme is formed, which can initiate transcription. Mg(2+) is required as a cofactor. The cofactor is Zn(2+).

It catalyses the reaction RNA(n) + a ribonucleoside 5'-triphosphate = RNA(n+1) + diphosphate. In terms of biological role, DNA-dependent RNA polymerase catalyzes the transcription of DNA into RNA using the four ribonucleoside triphosphates as substrates. This is Bifunctional DNA-directed RNA polymerase subunit beta-beta' (rpoBC) from Helicobacter pylori (strain HPAG1).